Reading from the N-terminus, the 419-residue chain is Serine hydroxymethyltransferase (419 aa).

Residues Leu121 and 125 to 127 (GHL) contribute to the (6S)-5,6,7,8-tetrahydrofolate site. Lys230 is subject to N6-(pyridoxal phosphate)lysine.

Belongs to the SHMT family. Homodimer. Pyridoxal 5'-phosphate is required as a cofactor.

It localises to the cytoplasm. It carries out the reaction (6R)-5,10-methylene-5,6,7,8-tetrahydrofolate + glycine + H2O = (6S)-5,6,7,8-tetrahydrofolate + L-serine. It functions in the pathway one-carbon metabolism; tetrahydrofolate interconversion. The protein operates within amino-acid biosynthesis; glycine biosynthesis; glycine from L-serine: step 1/1. Catalyzes the reversible interconversion of serine and glycine with tetrahydrofolate (THF) serving as the one-carbon carrier. This reaction serves as the major source of one-carbon groups required for the biosynthesis of purines, thymidylate, methionine, and other important biomolecules. Also exhibits THF-independent aldolase activity toward beta-hydroxyamino acids, producing glycine and aldehydes, via a retro-aldol mechanism. This chain is Serine hydroxymethyltransferase, found in Vesicomyosocius okutanii subsp. Calyptogena okutanii (strain HA).